A 118-amino-acid chain; its full sequence is MFRAGFKRFWNHPAGPKTVHFWAPAMKWTLVLSGIGDYARSPEYLSIRQYAALCATGAIWTRWSLIVRPKNYFNATVNFFLAIVGAVQVSRILVYQRQQKRITAQSEQRTELARSLAA.

3 helical membrane passes run 19 to 35 (VHFW…LSGI), 50 to 66 (YAAL…WSLI), and 72 to 94 (YFNA…RILV).

The protein belongs to the mitochondrial pyruvate carrier (MPC) (TC 2.A.105) family. In terms of assembly, the functional 150 kDa pyruvate import complex is a heteromer of mpc1 and mpc2.

Its subcellular location is the mitochondrion inner membrane. Mediates the uptake of pyruvate into mitochondria. The polypeptide is Probable mitochondrial pyruvate carrier 2 (Schizosaccharomyces pombe (strain 972 / ATCC 24843) (Fission yeast)).